The chain runs to 245 residues: MIIVSGQLLRPQDIENWQIDQDLNPLLKEMIETPVQFDYHSIAELMFELKLRMNIVAAAKTLHKSGAKFATFLKTYGNTTYWRVSPEGALELKYRMPPSKAIRDIAENGPFYAFECATAIVIIYYLALIDTIGEDKFNASFDRIILYDWHYEKLPIYTETGHHFFLGDCLYFKNPEFDPQKAQWRGENVILLGEDKYFAHGLGILNGKQIIDKLNSFRKKGALQSAYLLSQATRLDVPSLFRIVR.

The protein belongs to the bacillus TGase family.

The catalysed reaction is L-glutaminyl-[protein] + L-lysyl-[protein] = [protein]-L-lysyl-N(6)-5-L-glutamyl-[protein] + NH4(+). Functionally, probably plays a role in the assembly of the spore coat proteins by catalyzing epsilon-(gamma-glutamyl)lysine cross-links. In wild-type spores at 37 degrees Celsius, tgl mediates the cross-linking of GerQ in higher molecular mass forms, probably in cooperation with YabG. The sequence is that of Protein-glutamine gamma-glutamyltransferase (tgl) from Bacillus subtilis (strain 168).